Consider the following 130-residue polypeptide: Large ribosomal subunit protein bL20 (130 aa).

Belongs to the bacterial ribosomal protein bL20 family.

In terms of biological role, binds directly to 23S ribosomal RNA and is necessary for the in vitro assembly process of the 50S ribosomal subunit. It is not involved in the protein synthesizing functions of that subunit. The sequence is that of Large ribosomal subunit protein bL20 from Nocardioides sp. (strain ATCC BAA-499 / JS614).